A 155-amino-acid polypeptide reads, in one-letter code: Small ribosomal subunit protein uS7 (155 aa).

The protein belongs to the universal ribosomal protein uS7 family. As to quaternary structure, part of the 30S ribosomal subunit. Contacts proteins S9 and S11.

Its function is as follows. One of the primary rRNA binding proteins, it binds directly to 16S rRNA where it nucleates assembly of the head domain of the 30S subunit. Is located at the subunit interface close to the decoding center, probably blocks exit of the E-site tRNA. The protein is Small ribosomal subunit protein uS7 of Prosthecochloris aestuarii (strain DSM 271 / SK 413).